Here is a 353-residue protein sequence, read N- to C-terminus: UPF0283 membrane protein YpsIP31758_1791 (353 aa).

3 helical membrane-spanning segments follow: residues 71-91 (MVTA…VQWV), 101-121 (IALG…GSVV), and 214-234 (ESAL…FIAW).

The protein belongs to the UPF0283 family.

It is found in the cell inner membrane. This Yersinia pseudotuberculosis serotype O:1b (strain IP 31758) protein is UPF0283 membrane protein YpsIP31758_1791.